Here is a 377-residue protein sequence, read N- to C-terminus: Chaperone protein DnaJ (377 aa).

The region spanning 8 to 73 (CYYETLEVER…DKRAAYDRFG (66 aa)) is the J domain. The CR-type zinc-finger motif lies at 135–213 (GKTAQIEIPV…CSGQGRVTRE (79 aa)). Zn(2+) is bound by residues Cys148, Cys151, Cys165, Cys168, Cys187, Cys190, Cys201, and Cys204. CXXCXGXG motif repeat units follow at residues 148–155 (CEACSGIG), 165–172 (CSTCGGAG), 187–194 (CPGCQGRG), and 201–208 (CPSCSGQG).

The protein belongs to the DnaJ family. Homodimer. The cofactor is Zn(2+).

The protein localises to the cytoplasm. Participates actively in the response to hyperosmotic and heat shock by preventing the aggregation of stress-denatured proteins and by disaggregating proteins, also in an autonomous, DnaK-independent fashion. Unfolded proteins bind initially to DnaJ; upon interaction with the DnaJ-bound protein, DnaK hydrolyzes its bound ATP, resulting in the formation of a stable complex. GrpE releases ADP from DnaK; ATP binding to DnaK triggers the release of the substrate protein, thus completing the reaction cycle. Several rounds of ATP-dependent interactions between DnaJ, DnaK and GrpE are required for fully efficient folding. Also involved, together with DnaK and GrpE, in the DNA replication of plasmids through activation of initiation proteins. The sequence is that of Chaperone protein DnaJ from Bradyrhizobium diazoefficiens (strain JCM 10833 / BCRC 13528 / IAM 13628 / NBRC 14792 / USDA 110).